A 191-amino-acid polypeptide reads, in one-letter code: Putative manganese efflux pump MntP (191 aa).

6 consecutive transmembrane segments (helical) span residues 3–23 (PISI…AAIG), 37–57 (LRAG…GWLL), 65–85 (VEAF…IHMI), 107–129 (WKLA…GLAF), 144–164 (CTLT…SMVG), and 169–189 (IIGG…HLHG).

This sequence belongs to the MntP (TC 9.B.29) family.

The protein localises to the cell inner membrane. Functionally, probably functions as a manganese efflux pump. The sequence is that of Putative manganese efflux pump MntP from Stenotrophomonas maltophilia (strain R551-3).